A 262-amino-acid polypeptide reads, in one-letter code: Pyridoxine 5'-phosphate synthase (262 aa).

N6 is a 3-amino-2-oxopropyl phosphate binding site. 8-9 (DH) serves as a coordination point for 1-deoxy-D-xylulose 5-phosphate. R17 serves as a coordination point for 3-amino-2-oxopropyl phosphate. H43 functions as the Proton acceptor in the catalytic mechanism. 1-deoxy-D-xylulose 5-phosphate is bound by residues R45 and H50. E70 (proton acceptor) is an active-site residue. Residue T102 participates in 1-deoxy-D-xylulose 5-phosphate binding. The active-site Proton donor is H215. 3-amino-2-oxopropyl phosphate contacts are provided by residues G216 and 237 to 238 (GH).

The protein belongs to the PNP synthase family. As to quaternary structure, homooctamer; tetramer of dimers.

Its subcellular location is the cytoplasm. It catalyses the reaction 3-amino-2-oxopropyl phosphate + 1-deoxy-D-xylulose 5-phosphate = pyridoxine 5'-phosphate + phosphate + 2 H2O + H(+). Its pathway is cofactor biosynthesis; pyridoxine 5'-phosphate biosynthesis; pyridoxine 5'-phosphate from D-erythrose 4-phosphate: step 5/5. Functionally, catalyzes the complicated ring closure reaction between the two acyclic compounds 1-deoxy-D-xylulose-5-phosphate (DXP) and 3-amino-2-oxopropyl phosphate (1-amino-acetone-3-phosphate or AAP) to form pyridoxine 5'-phosphate (PNP) and inorganic phosphate. The protein is Pyridoxine 5'-phosphate synthase of Helicobacter pylori (strain P12).